Consider the following 317-residue polypeptide: GPI-specific phospholipase A2-like PGAP3 (317 aa).

The N-terminal stretch at 1–18 (MAPFLVLFLAGVVSASRG) is a signal peptide. Topologically, residues 19–93 (DREPVYRDCV…QFHGKWPFSR (75 aa)) are lumenal. N-linked (GlcNAc...) asparagine glycosylation is present at asparagine 35. Residues 94 to 114 (FLFFQEPASALASFLNGVASL) form a helical membrane-spanning segment. Topologically, residues 115–132 (LMLFRYRSSVPSSCQMYR) are cytoplasmic. A helical transmembrane segment spans residues 133-153 (TCLAFSMVSVNAWFWSTIFHT). The Lumenal portion of the chain corresponds to 154-163 (RDTALTEKMD). A helical membrane pass occupies residues 164–180 (YFCASSVILHSIYLCCM). The Cytoplasmic segment spans residues 181 to 189 (RTFGLQYPS). The chain crosses the membrane as a helical span at residues 190–210 (IANAFGAFLVLLFACHISYLT). Residues 211–219 (LGRFDYSYN) lie on the Lumenal side of the membrane. A helical membrane pass occupies residues 220 to 240 (MAANTSFGIVNLMWWLAWCMW). The Cytoplasmic segment spans residues 241–251 (RRFHQPYLWKC). Residues 252–272 (VLVVVLLQSLALLELLDFPPV) form a helical membrane-spanning segment. Methionine 273 is a topological domain (lumenal). The helical transmembrane segment at 274-293 (WILDAHALWHFSTIPLHFLF) threads the bilayer. Topologically, residues 294 to 317 (YSFLRDDSLYLLKVNHDDDIPKLD) are cytoplasmic.

This sequence belongs to the PGAP3 family.

It is found in the golgi apparatus membrane. Functionally, involved in the fatty acid remodeling steps of GPI-anchor maturation where the unsaturated acyl chain at sn-2 of inositol phosphate is replaced by a saturated stearoyl chain. May catalyze the first step of the fatty acid remodeling, by removing the unsaturated acyl chain at sn-2 of inositol phosphate, generating a lyso-GPI intermediate. The fatty acid remodeling steps is critical for the integration of GPI-APs into lipid rafts. In Xenopus laevis (African clawed frog), this protein is GPI-specific phospholipase A2-like PGAP3.